The primary structure comprises 528 residues: Sodium-dependent lysophosphatidylcholine symporter 1 (528 aa).

Topologically, residues 1–37 (MAGGGGAERVRVGAAAAGLLPPSCRQPRRRESRERLS) are cytoplasmic. Residues 38–66 (VCSKLCYAVGGAPYQTTGCALGFFLQIYL) traverse the membrane as a helical segment. Over 67–73 (LDVAQLD) the chain is Extracellular. The chain crosses the membrane as a helical span at residues 74–99 (PFYASIILFVGRAWDAITDPMVGFFI). The Cytoplasmic segment spans residues 100–109 (SKTPWTRFGR). The chain crosses the membrane as a helical span at residues 110-129 (LMPWIIFSTPFAVISYFLIW). The Extracellular segment spans residues 130–138 (FVPDISTGQ). A helical membrane pass occupies residues 139–161 (VMWYLIFYCIFQTLVTCFHVPYS). Residues 162–176 (ALTMFISREQSERDS) lie on the Cytoplasmic side of the membrane. Residues 177 to 199 (ATAYRMTVEVLGTVLGTAIQGQI) traverse the membrane as a helical segment. Topologically, residues 200 to 241 (VGKAVTPCIENPPFLSETNFSVAIRNVNMTHYTGSLADTRNA) are extracellular. A disulfide bond links Cys-207 and Cys-460. 2 N-linked (GlcNAc...) asparagine glycosylation sites follow: Asn-218 and Asn-227. A helical membrane pass occupies residues 242–263 (YMVAAGVIGGLYILCAVILSVG). Topologically, residues 264–295 (VREKRESSELQSDEPVSFFRGLKLVMNHGAYI) are cytoplasmic. A helical membrane pass occupies residues 296–319 (KLITGFLFTSLAFMLLEGNFALFC). Residues 320-328 (TYTLGFRNE) are Extracellular-facing. A helical transmembrane segment spans residues 329–351 (FQNILLAIMLSATLTIPFWQWFL). The Cytoplasmic segment spans residues 352-355 (TRFG). Residues 356 to 376 (KKTAVYVGISSAVPFLITVVV) traverse the membrane as a helical segment. The Extracellular portion of the chain corresponds to 377–381 (LDSNL). Residues 382–404 (VVTYIVAVAAGISVAAAFLLPWS) form a helical membrane-spanning segment. The Cytoplasmic segment spans residues 405 to 427 (MLPDVIDDFKLQHPESRGHEAIF). The chain crosses the membrane as a helical span at residues 428–450 (FSFYVFFTKFTSGVSLGISTLSL). The Extracellular portion of the chain corresponds to 451-467 (DFAGYQTRGCSQPSEVN). Residues 468 to 490 (ITLKLLVSAVPVGLILLGLLLFK) traverse the membrane as a helical segment. The Cytoplasmic segment spans residues 491–528 (LYPIDEEKRRENKKALQDLREESNSSSESDSTELANIV). Over residues 503–513 (KKALQDLREES) the composition is skewed to basic and acidic residues. The disordered stretch occupies residues 503-528 (KKALQDLREESNSSSESDSTELANIV). Over residues 514–528 (NSSSESDSTELANIV) the composition is skewed to low complexity.

It belongs to the major facilitator superfamily.

Its subcellular location is the cell membrane. The protein resides in the endoplasmic reticulum membrane. It carries out the reaction a 1-acyl-sn-glycero-3-phosphocholine(in) + Na(+)(in) = a 1-acyl-sn-glycero-3-phosphocholine(out) + Na(+)(out). The catalysed reaction is 1-(4Z,7Z,10Z,13Z,16Z,19Z-docosahexaenoyl)-sn-glycero-3-phosphocholine(in) + Na(+)(in) = 1-(4Z,7Z,10Z,13Z,16Z,19Z-docosahexaenoyl)-sn-glycero-3-phosphocholine(out) + Na(+)(out). The enzyme catalyses 1-(9Z-octadecenoyl)-sn-glycero-3-phosphocholine(in) + Na(+)(in) = 1-(9Z-octadecenoyl)-sn-glycero-3-phosphocholine(out) + Na(+)(out). It catalyses the reaction 1-hexadecanoyl-sn-glycero-3-phosphocholine(in) + Na(+)(in) = 1-hexadecanoyl-sn-glycero-3-phosphocholine(out) + Na(+)(out). It carries out the reaction a 1-acyl-sn-glycero-3-phosphoethanolamine(in) + Na(+)(in) = a 1-acyl-sn-glycero-3-phosphoethanolamine(out) + Na(+)(out). Its function is as follows. Sodium-dependent lysophosphatidylcholine (LPC) symporter, which plays an essential role for blood-brain barrier formation and function. Specifically expressed in endothelium of the blood-brain barrier of micro-vessels and transports LPC into the brain. Transport of LPC is essential because it constitutes the major mechanism by which docosahexaenoic acid (DHA), an omega-3 fatty acid that is essential for normal brain growth and cognitive function, enters the brain. Transports LPC carrying long-chain fatty acids such LPC oleate and LPC palmitate with a minimum acyl chain length of 14 carbons. Does not transport docosahexaenoic acid in unesterified fatty acid. The polypeptide is Sodium-dependent lysophosphatidylcholine symporter 1 (Gallus gallus (Chicken)).